The following is a 517-amino-acid chain: Nuclear transcription factor Y subunit alpha (517 aa).

Residues 1 to 11 (MNQINYLTSER) are compositionally biased toward polar residues. Disordered stretches follow at residues 1–95 (MNQI…MDIH), 121–183 (RIDY…NFNY), 252–281 (ESENKLPKTRKAYQHESRHQHAIRRQRGCG), and 304–517 (AAAN…NNRS). Composition is skewed to low complexity over residues 26–81 (NNSS…SSSS) and 126–183 (NNNN…NFNY). Residues 232 to 255 (YVNAKQYNRILKRRAARAKLESEN) carry the Subunit association domain (SAD) motif. The NFYA/HAP2-type DNA-binding region spans 262 to 287 (KAYQHESRHQHAIRRQRGCGGRFLTK). A compositionally biased stretch (low complexity) spans 304-345 (AAANPNASSTSTTTSNITNNNNNNNNNNNTNNNNNNNNTNVN). A compositionally biased stretch (acidic residues) spans 359–371 (SDDDIENDVENDS). Low complexity-rich tracts occupy residues 377–388 (KNNSNSPNQSSS) and 408–423 (NNNINNNNNNNNNNNN). Over residues 438-447 (PLLNNGHIQA) the composition is skewed to polar residues. The segment covering 448–517 (QQNQSPSSSP…PLSNFSNNRS (70 aa)) has biased composition (low complexity).

The protein belongs to the NFYA/HAP2 subunit family. As to quaternary structure, heterotrimeric transcription factor composed of three components, nfyA, nfyB and nfyC. nfyB and nfyC must interact and dimerize for nfyA association and DNA binding.

It is found in the nucleus. In terms of biological role, component of the NF-Y/HAP transcription factor complex. The NF-Y complex stimulates the transcription of various genes by recognizing and binding to a CCAAT motif in promoters. In Dictyostelium discoideum (Social amoeba), this protein is Nuclear transcription factor Y subunit alpha (nfyA).